Here is a 109-residue protein sequence, read N- to C-terminus: Putative pterin-4-alpha-carbinolamine dehydratase (109 aa).

The protein belongs to the pterin-4-alpha-carbinolamine dehydratase family.

It catalyses the reaction (4aS,6R)-4a-hydroxy-L-erythro-5,6,7,8-tetrahydrobiopterin = (6R)-L-erythro-6,7-dihydrobiopterin + H2O. In Rickettsia canadensis (strain McKiel), this protein is Putative pterin-4-alpha-carbinolamine dehydratase.